The chain runs to 208 residues: Small ribosomal subunit protein uS4 (208 aa).

The 62-residue stretch at 98 to 159 (RRLDNVVYRL…KSRKIVSIND (62 aa)) folds into the S4 RNA-binding domain.

The protein belongs to the universal ribosomal protein uS4 family. In terms of assembly, part of the 30S ribosomal subunit. Contacts protein S5. The interaction surface between S4 and S5 is involved in control of translational fidelity.

Its function is as follows. One of the primary rRNA binding proteins, it binds directly to 16S rRNA where it nucleates assembly of the body of the 30S subunit. With S5 and S12 plays an important role in translational accuracy. This chain is Small ribosomal subunit protein uS4, found in Pelobacter propionicus (strain DSM 2379 / NBRC 103807 / OttBd1).